A 163-amino-acid polypeptide reads, in one-letter code: Nucleotide-binding protein BLi01194 (163 aa).

Belongs to the YajQ family.

In terms of biological role, nucleotide-binding protein. The protein is Nucleotide-binding protein BLi01194 of Bacillus licheniformis (strain ATCC 14580 / DSM 13 / JCM 2505 / CCUG 7422 / NBRC 12200 / NCIMB 9375 / NCTC 10341 / NRRL NRS-1264 / Gibson 46).